The chain runs to 313 residues: Peptidyl-prolyl cis-trans isomerase 9 (313 aa).

Residues 9-174 form the PPIase cyclophilin-type domain; sequence FLDMALDEKP…AKVRIFNSGE (166 aa). Composition is skewed to basic and acidic residues over residues 216–230 and 253–269; these read EERE…ESSR and RGDR…KDDF. Disordered stretches follow at residues 216 to 274 and 288 to 313; these read EERE…IAVR and TPEH…DLQP.

The protein belongs to the cyclophilin-type PPIase family.

The catalysed reaction is [protein]-peptidylproline (omega=180) = [protein]-peptidylproline (omega=0). PPIases accelerate the folding of proteins. It catalyzes the cis-trans isomerization of proline imid ic peptide bonds in oligopeptides. Thought to function as a catalyst in the folding and modification of cuticle collagens. In Caenorhabditis briggsae, this protein is Peptidyl-prolyl cis-trans isomerase 9.